The sequence spans 379 residues: uncharacterized protein (379 aa).

Disordered regions lie at residues methionine 1 to lysine 25, glutamine 128 to threonine 158, and threonine 355 to isoleucine 379. The segment covering glutamine 128–isoleucine 141 has biased composition (polar residues).

This is an uncharacterized protein from Caenorhabditis elegans.